The following is a 154-amino-acid chain: 6,7-dimethyl-8-ribityllumazine synthase (154 aa).

5-amino-6-(D-ribitylamino)uracil is bound by residues F23, 57 to 59, and 81 to 83; these read AFE and AVI. (2S)-2-hydroxy-3-oxobutyl phosphate is bound at residue 86-87; sequence ST. H89 acts as the Proton donor in catalysis. F114 serves as a coordination point for 5-amino-6-(D-ribitylamino)uracil. R128 serves as a coordination point for (2S)-2-hydroxy-3-oxobutyl phosphate.

This sequence belongs to the DMRL synthase family.

The catalysed reaction is (2S)-2-hydroxy-3-oxobutyl phosphate + 5-amino-6-(D-ribitylamino)uracil = 6,7-dimethyl-8-(1-D-ribityl)lumazine + phosphate + 2 H2O + H(+). It participates in cofactor biosynthesis; riboflavin biosynthesis; riboflavin from 2-hydroxy-3-oxobutyl phosphate and 5-amino-6-(D-ribitylamino)uracil: step 1/2. In terms of biological role, catalyzes the formation of 6,7-dimethyl-8-ribityllumazine by condensation of 5-amino-6-(D-ribitylamino)uracil with 3,4-dihydroxy-2-butanone 4-phosphate. This is the penultimate step in the biosynthesis of riboflavin. The sequence is that of 6,7-dimethyl-8-ribityllumazine synthase from Campylobacter jejuni subsp. doylei (strain ATCC BAA-1458 / RM4099 / 269.97).